The chain runs to 86 residues: Small ribosomal subunit protein bS20 (86 aa).

A disordered region spans residues 1–25 (MANSASSRKRARQAVKRNKHNSQIR). Residues 7–25 (SRKRARQAVKRNKHNSQIR) show a composition bias toward basic residues.

It belongs to the bacterial ribosomal protein bS20 family.

In terms of biological role, binds directly to 16S ribosomal RNA. The sequence is that of Small ribosomal subunit protein bS20 from Vesicomyosocius okutanii subsp. Calyptogena okutanii (strain HA).